Consider the following 432-residue polypeptide: Tubulin-specific chaperone cofactor E-like protein (432 aa).

7 LRR repeats span residues 69-94 (ASHVSEADLGWNQISKWSDIACILKN), 95-117 (LPHLRVLNIGHNPLNPVIDHELP), 118-140 (VSTLHTIILNGTHLPFKTLQSFL), 143-167 (LPKVTELHMSDNQFNDDDDCDEPIS), 168-191 (TTVRTVHLNRCGFLKWSSVMNVVK), 193-217 (FPNVCSVFVCENPLKDVTHCKHFEQ), and 218-242 (LPFWNFLNLAKTSIDSWDSLDQLNR). Positions 254 to 295 (IPLLDALTNEERLHLIIGRLHHLRVLNGSKISSEQREQSERF) are LRRCT. Residues 324-415 (VTIDLTPKKE…GDSFLVQEKI (92 aa)) are ubiquitin-like (UBL).

The protein resides in the cytoplasm. It is found in the cytoskeleton. Acts as a regulator of tubulin stability. Involved in microtubule-dependent neuronal function. May be involved in tubulin acetylation/deacetylation pathway. This is Tubulin-specific chaperone cofactor E-like protein from Caenorhabditis elegans.